The chain runs to 462 residues: Siroheme synthase (462 aa).

The segment at 1-201 (MQFLPLFHKL…GKPEEGERLL (201 aa)) is precorrin-2 dehydrogenase /sirohydrochlorin ferrochelatase. NAD(+) is bound by residues 22–23 (EV) and 43–44 (PE). Ser-126 is modified (phosphoserine). The interval 214 to 462 (GEVYLVGAGP…AWFEGAQGSL (249 aa)) is uroporphyrinogen-III C-methyltransferase. Pro-223 is a binding site for S-adenosyl-L-methionine. The Proton acceptor role is filled by Asp-246. Lys-268 acts as the Proton donor in catalysis. S-adenosyl-L-methionine-binding positions include 299-301 (GGD), Ile-304, 329-330 (TA), Met-381, and Gly-410.

In the N-terminal section; belongs to the precorrin-2 dehydrogenase / sirohydrochlorin ferrochelatase family. The protein in the C-terminal section; belongs to the precorrin methyltransferase family.

It carries out the reaction uroporphyrinogen III + 2 S-adenosyl-L-methionine = precorrin-2 + 2 S-adenosyl-L-homocysteine + H(+). It catalyses the reaction precorrin-2 + NAD(+) = sirohydrochlorin + NADH + 2 H(+). The enzyme catalyses siroheme + 2 H(+) = sirohydrochlorin + Fe(2+). Its pathway is cofactor biosynthesis; adenosylcobalamin biosynthesis; precorrin-2 from uroporphyrinogen III: step 1/1. It participates in cofactor biosynthesis; adenosylcobalamin biosynthesis; sirohydrochlorin from precorrin-2: step 1/1. It functions in the pathway porphyrin-containing compound metabolism; siroheme biosynthesis; precorrin-2 from uroporphyrinogen III: step 1/1. The protein operates within porphyrin-containing compound metabolism; siroheme biosynthesis; siroheme from sirohydrochlorin: step 1/1. Its pathway is porphyrin-containing compound metabolism; siroheme biosynthesis; sirohydrochlorin from precorrin-2: step 1/1. Functionally, multifunctional enzyme that catalyzes the SAM-dependent methylations of uroporphyrinogen III at position C-2 and C-7 to form precorrin-2 via precorrin-1. Then it catalyzes the NAD-dependent ring dehydrogenation of precorrin-2 to yield sirohydrochlorin. Finally, it catalyzes the ferrochelation of sirohydrochlorin to yield siroheme. The polypeptide is Siroheme synthase (Ectopseudomonas mendocina (strain ymp) (Pseudomonas mendocina)).